Reading from the N-terminus, the 342-residue chain is Trans-3-hydroxy-L-proline dehydratase (342 aa).

The active-site Proton acceptor is serine 90. Residues 91–92 (GS), aspartate 252, and 257–258 (GT) contribute to the substrate site.

It belongs to the proline racemase family.

The catalysed reaction is trans-3-hydroxy-L-proline = 1-pyrroline-2-carboxylate + H2O. Functionally, catalyzes the dehydration of trans-3-hydroxy-L-proline (t3LHyp) to Delta(1)-pyrroline-2-carboxylate (Pyr2C). Can also catalyze the epimerization of trans-4-hydroxy-L-proline (t4LHyp) to cis-4-hydroxy-D-proline (c4DHyp), albeit with 150-fold lower efficiency. May be involved in the degradation pathway that converts t3LHyp to L-proline, which would allow R.meliloti to grow on t3LHyp as a sole carbon source. Displays no proline racemase activity. In Rhizobium meliloti (strain 1021) (Ensifer meliloti), this protein is Trans-3-hydroxy-L-proline dehydratase.